The chain runs to 675 residues: Methionine--tRNA ligase (675 aa).

The short motif at 15-25 (PYANGSIHLGH) is the 'HIGH' region element. Zn(2+) is bound by residues C146, C149, C159, and C162. Residues 331 to 335 (KMSKS) carry the 'KMSKS' region motif. K334 contacts ATP. The tRNA-binding domain maps to 574 to 675 (DFAKIDLRIA…EGAQPGMKVK (102 aa)).

The protein belongs to the class-I aminoacyl-tRNA synthetase family. MetG type 1 subfamily. In terms of assembly, homodimer. Zn(2+) is required as a cofactor.

Its subcellular location is the cytoplasm. It carries out the reaction tRNA(Met) + L-methionine + ATP = L-methionyl-tRNA(Met) + AMP + diphosphate. Functionally, is required not only for elongation of protein synthesis but also for the initiation of all mRNA translation through initiator tRNA(fMet) aminoacylation. The sequence is that of Methionine--tRNA ligase from Pseudoalteromonas atlantica (strain T6c / ATCC BAA-1087).